The primary structure comprises 639 residues: MEEVDRILIHSLRQAGTDIDEDVQSVKQFTSELIVEAVVRCLRVIDPAVGNGLSHSLPPGMSARFRLGMSLAQACQDVGFKGEIGYQTFLYSNEPEIRSLFMFLVERLPRESAEASDQPAGKSVLLQRAIAAQIKAQLSVPWLPPTCRLPVHRKTQSSGPCHSFHAQPLSLPCSLKVSSRKQPKEVQEYWRNYLLPVTAQPSQPASVPASLLENHISELSAAQEWESEWNSQGLLSRLTPEEYRSRKKARLQKRIEEQLRTAAQPRPDTHGATRSTSDLAELLQSFGGASTGGDVLTKGTRFTHTEKFTFTQEPEKAVQQMAAAASALPSSQQSEEDLKAQQEAELSALQQQLQQLSVQMEEVGGGIKQLTVSIQQVTDELQTREVTNAERENSVKIKRQTIDLLPDAENNLLKLQSLVESSSKRVVQLASQWEKHRVPLIDEHRRLKELCSNRESESSRKLSEIKDLHDKIRQSAEEAKKKESLYKQLLTEFETLSKDVSRSAYTIRILEIVGNIKKQKEEITKILSDTKDLQKEINGLTGKLDRTFAVTDELVFKDAKKDESVRKSYKYLAALHENCTQLIQTIEDTGTIMREIRDLEEQIETENGKRTVSNLEKILEDYKAIRQENSALAAKIREG.

Coiled coils occupy residues 331 to 370 (SQQSEEDLKAQQEAELSALQQQLQQLSVQMEEVGGGIKQL), 459 to 541 (SRKL…NGLT), and 591 to 638 (TIMR…KIRE).

Belongs to the CCDC22 family.

The protein localises to the endosome. It is found in the cytoplasm. Its subcellular location is the cytoskeleton. It localises to the microtubule organizing center. The protein resides in the centrosome. In terms of biological role, may be involved in regulation of NF-kappa-B signaling. May be involved in copper-dependent atp7a trafficking between the trans-Golgi network and vesicles in the cell periphery. The sequence is that of Coiled-coil domain-containing protein 22 (ccdc22) from Danio rerio (Zebrafish).